A 562-amino-acid polypeptide reads, in one-letter code: Dihydroxy-acid dehydratase (562 aa).

D78 lines the Mg(2+) pocket. [2Fe-2S] cluster is bound at residue C119. Positions 120 and 121 each coordinate Mg(2+). K121 is modified (N6-carboxylysine). Residue C192 participates in [2Fe-2S] cluster binding. E450 lines the Mg(2+) pocket. S476 functions as the Proton acceptor in the catalytic mechanism.

Belongs to the IlvD/Edd family. As to quaternary structure, homodimer. It depends on [2Fe-2S] cluster as a cofactor. The cofactor is Mg(2+).

The catalysed reaction is (2R)-2,3-dihydroxy-3-methylbutanoate = 3-methyl-2-oxobutanoate + H2O. It catalyses the reaction (2R,3R)-2,3-dihydroxy-3-methylpentanoate = (S)-3-methyl-2-oxopentanoate + H2O. The protein operates within amino-acid biosynthesis; L-isoleucine biosynthesis; L-isoleucine from 2-oxobutanoate: step 3/4. It functions in the pathway amino-acid biosynthesis; L-valine biosynthesis; L-valine from pyruvate: step 3/4. Functionally, functions in the biosynthesis of branched-chain amino acids. Catalyzes the dehydration of (2R,3R)-2,3-dihydroxy-3-methylpentanoate (2,3-dihydroxy-3-methylvalerate) into 2-oxo-3-methylpentanoate (2-oxo-3-methylvalerate) and of (2R)-2,3-dihydroxy-3-methylbutanoate (2,3-dihydroxyisovalerate) into 2-oxo-3-methylbutanoate (2-oxoisovalerate), the penultimate precursor to L-isoleucine and L-valine, respectively. This Nautilia profundicola (strain ATCC BAA-1463 / DSM 18972 / AmH) protein is Dihydroxy-acid dehydratase.